The primary structure comprises 476 residues: Bifunctional protein HldE (476 aa).

Residues 1 to 319 (MKPTLPNYDQ…EAIHGSQDSG (319 aa)) are ribokinase. ATP is bound at residue 195-198 (NMLE). Asp264 is an active-site residue. The tract at residues 344-476 (MTNGCFDILH…IIEAIKGGRG (133 aa)) is cytidylyltransferase.

It in the N-terminal section; belongs to the carbohydrate kinase PfkB family. This sequence in the C-terminal section; belongs to the cytidylyltransferase family. As to quaternary structure, homodimer.

It catalyses the reaction D-glycero-beta-D-manno-heptose 7-phosphate + ATP = D-glycero-beta-D-manno-heptose 1,7-bisphosphate + ADP + H(+). It carries out the reaction D-glycero-beta-D-manno-heptose 1-phosphate + ATP + H(+) = ADP-D-glycero-beta-D-manno-heptose + diphosphate. It participates in nucleotide-sugar biosynthesis; ADP-L-glycero-beta-D-manno-heptose biosynthesis; ADP-L-glycero-beta-D-manno-heptose from D-glycero-beta-D-manno-heptose 7-phosphate: step 1/4. The protein operates within nucleotide-sugar biosynthesis; ADP-L-glycero-beta-D-manno-heptose biosynthesis; ADP-L-glycero-beta-D-manno-heptose from D-glycero-beta-D-manno-heptose 7-phosphate: step 3/4. Catalyzes the phosphorylation of D-glycero-D-manno-heptose 7-phosphate at the C-1 position to selectively form D-glycero-beta-D-manno-heptose-1,7-bisphosphate. Functionally, catalyzes the ADP transfer from ATP to D-glycero-beta-D-manno-heptose 1-phosphate, yielding ADP-D-glycero-beta-D-manno-heptose. This Aliivibrio fischeri (strain ATCC 700601 / ES114) (Vibrio fischeri) protein is Bifunctional protein HldE.